The chain runs to 1680 residues: SWI/SNF chromatin-remodeling complex subunit snf22 (1680 aa).

Disordered stretches follow at residues 61 to 135, 203 to 258, 274 to 300, and 367 to 427; these read QQMR…SQAS, NNSF…HSFS, RRGS…ASPY, and YVYR…VPPT. The segment covering 62–91 has biased composition (polar residues); that stretch reads QMRNQSSEFPDAENTNLRKQQDTLPTTGFN. Low complexity-rich tracts occupy residues 118–127 and 222–233; these read GNGNVGLNNP and SSLPHSFASPSS. Positions 234-245 are enriched in polar residues; sequence TFEQPHTVQSRA. Low complexity-rich tracts occupy residues 247 to 258, 282 to 299, and 374 to 392; these read SVDTTSSSHSFS, PSTF…LASP, and PPSA…SVDP. The segment covering 406 to 419 has biased composition (polar residues); it reads PSPSASALKTQSHV. One can recognise a QLQ domain in the interval 429–465; sequence KLNHAQLAMLKSQIVAYNCLNSPNGQVPPAVQQAIFG. Residues 477–489 are compositionally biased toward polar residues; that stretch reads SMPFQQNVPQMSS. Residues 477–499 form a disordered region; the sequence is SMPFQQNVPQMSSVKKDTPTRDA. The span at 490-499 shows a compositional bias: basic and acidic residues; sequence VKKDTPTRDA. Positions 704 to 776 constitute an HSA domain; that stretch reads QKTEHAMRQK…ARQRLQALRA (73 aa). A compositionally biased stretch (polar residues) spans 817–832; sequence SNIHSGNTSGKGSNSA. The tract at residues 817-836 is disordered; the sequence is SNIHSGNTSGKGSNSAELEA. In terms of domain architecture, Helicase ATP-binding spans 881-1046; sequence LSLYNNNLNG…WALLNFVLPK (166 aa). ATP is bound at residue 894–901; it reads DEMGLGKT. The DEGH box signature appears at 996–999; it reads DEGH. Residues 1191-1354 enclose the Helicase C-terminal domain; that stretch reads LLDRILPKLF…STPEEREAFL (164 aa). Residues 1466 to 1511 form a disordered region; it reads TVDDPSSTLMPRKRGRPRKKTNSGSSLSTPLSQESSLARSGRKNTP. Positions 1476-1486 are enriched in basic residues; that stretch reads PRKRGRPRKKT. Positions 1488–1502 are enriched in low complexity; sequence SGSSLSTPLSQESSL. In terms of domain architecture, Bromo spans 1513–1623; that stretch reads YKQKALRRYC…KTLKEVIEDL (111 aa).

It belongs to the SNF2/RAD54 helicase family. Component of the SWI/SNF global transcription activator complex composed of at least arp9, arp42, snf5, snf22, snf30, sbf59, sol1, ssr1, ssr2, ssr3, ssr4 and tfg3.

The protein resides in the nucleus. Functionally, helicase. Component of the SWI/SNF complex, an ATP-dependent chromatin remodeling complex, required for the positive and negative regulation of gene expression of a large number of genes. It changes chromatin structure by altering DNA-histone contacts within a nucleosome, leading eventually to a change in nucleosome position, thus facilitating or repressing binding of gene-specific transcription factors. The chain is SWI/SNF chromatin-remodeling complex subunit snf22 (snf22) from Schizosaccharomyces pombe (strain 972 / ATCC 24843) (Fission yeast).